Here is a 348-residue protein sequence, read N- to C-terminus: Ferredoxin--NADP reductase 1 (348 aa).

FAD contacts are provided by glutamate 36, lysine 44, tyrosine 48, isoleucine 88, proline 123, aspartate 285, and serine 326. Residues 329-348 (EKFKKKNEQLKQEKQAQLMN) form a disordered region.

This sequence belongs to the ferredoxin--NADP reductase type 2 family. As to quaternary structure, homodimer. The cofactor is FAD.

The catalysed reaction is 2 reduced [2Fe-2S]-[ferredoxin] + NADP(+) + H(+) = 2 oxidized [2Fe-2S]-[ferredoxin] + NADPH. This chain is Ferredoxin--NADP reductase 1, found in Shouchella clausii (strain KSM-K16) (Alkalihalobacillus clausii).